The following is a 404-amino-acid chain: Glycosyltransferase GlyB (404 aa).

The GT8 domain stretch occupies residues 1 to 267 (MNTKSIVFNA…ILLRKDIISR (267 aa)). Residues 9–14 (NADNDY) and 103–104 (DS) each bind UDP. Residues aspartate 103, aspartate 105, and histidine 228 each coordinate Mn(2+). 228 to 233 (HYTGVK) lines the UDP pocket.

The protein in the N-terminal section; belongs to the glycosyltransferase 8 family.

Functionally, may be involved in the polymorphic O-glycosylation of the serine-rich repeat protein PsrP. Has equal hydrolytic activity against both UDP-galactose and UDP-glucose; no glycosyltransferase activity has been seen with tested substrates. The chain is Glycosyltransferase GlyB from Streptococcus pneumoniae serotype 4 (strain ATCC BAA-334 / TIGR4).